We begin with the raw amino-acid sequence, 363 residues long: Flagellar P-ring protein (363 aa).

Residues 1–20 (MKLKLILAVAMLAFSLPSQA) form the signal peptide.

Belongs to the FlgI family. As to quaternary structure, the basal body constitutes a major portion of the flagellar organelle and consists of four rings (L,P,S, and M) mounted on a central rod.

The protein localises to the periplasm. It localises to the bacterial flagellum basal body. Its function is as follows. Assembles around the rod to form the L-ring and probably protects the motor/basal body from shearing forces during rotation. The sequence is that of Flagellar P-ring protein from Shewanella sp. (strain MR-7).